Here is a 972-residue protein sequence, read N- to C-terminus: Coatomer subunit beta (972 aa).

5 HEAT repeats span residues 79–113 (LLYFYWEIVPKLDQDGKLRHEMILVCNAIQHDLQH), 133–170 (ELLEQMVPSTLACLEYRHAYVRKYAILAVLSIYKVSEH), 317–354 (GCLEELTLDILRVLNAEDIDVRSKALTIAMDLVTSRNI), 397–434 (EIAANIVSLLLDFITDLNSVAANGVIAFVKDVVELYPQ), and 481–518 (RQSIGEIPILQTELKNQRKSQDEDDEATEESATKQAGP). Positions 494–522 (LKNQRKSQDEDDEATEESATKQAGPVILP) are disordered.

In terms of assembly, oligomeric complex that consists of at least the alpha, beta, beta', gamma, delta, epsilon and zeta subunits.

It is found in the cytoplasm. Its subcellular location is the golgi apparatus membrane. The protein resides in the cytoplasmic vesicle. It localises to the COPI-coated vesicle membrane. Its function is as follows. The coatomer is a cytosolic protein complex that binds to dilysine motifs and reversibly associates with Golgi non-clathrin-coated vesicles, which further mediate biosynthetic protein transport from the ER, via the Golgi up to the trans Golgi network. Coatomer complex is required for budding from Golgi membranes, and is essential for the retrograde Golgi-to-ER transport of dilysine-tagged proteins. The protein is Coatomer subunit beta of Candida glabrata (strain ATCC 2001 / BCRC 20586 / JCM 3761 / NBRC 0622 / NRRL Y-65 / CBS 138) (Yeast).